Here is a 2311-residue protein sequence, read N- to C-terminus: C2 domain-containing protein 3 (2311 aa).

Disordered regions lie at residues 447–511 (SDSS…TSRC) and 543–562 (GTAV…RPVR). Positions 470–509 (IALDRGRHRDNSPSEYKEDAKQTKGNDSLRDSKTSEKSTS) are enriched in basic and acidic residues. C2 domains follow at residues 508-666 (TSRC…SVTC), 751-888 (GNGG…TRLL), 952-1112 (LDPP…HRED), 1136-1303 (PSGL…SGWY), 1370-1505 (HKRE…TLAV), and 1581-1713 (KTEV…CGWY). Positions 939-964 (GTSQTAMPRPAHFLDPPLSSSQMGRP) are disordered. Disordered stretches follow at residues 1536-1589 (PSNS…LLDA), 1955-1977 (SEAY…GSLN), 2036-2065 (MTDR…PVNP), 2084-2233 (NDPS…SNLL), and 2261-2292 (VREG…PKEE). 2 stretches are compositionally biased toward basic and acidic residues: residues 1565 to 1589 (FEEK…LLDA) and 1955 to 1964 (SEAYEREGQR). Residues 2036 to 2047 (MTDRTSPWSSIL) show a composition bias toward polar residues. Basic and acidic residues predominate over residues 2048–2059 (SERDSDSMDHPQ). Residues 2084-2095 (NDPSSVLSSARS) are compositionally biased toward polar residues. The segment covering 2138–2151 (AESEAESQEMDGDP) has biased composition (acidic residues). Polar residues predominate over residues 2221 to 2233 (GSESPQVPPSNLL).

It is found in the cytoplasm. It localises to the cytoskeleton. The protein resides in the cilium basal body. Its subcellular location is the microtubule organizing center. The protein localises to the centrosome. It is found in the centriole. Functionally, component of the centrioles that acts as a positive regulator of centriole elongation. Promotes assembly of centriolar distal appendage, a structure at the distal end of the mother centriole that acts as an anchor of the cilium. Required for primary cilium formation. The sequence is that of C2 domain-containing protein 3 (c2cd3) from Xenopus tropicalis (Western clawed frog).